A 793-amino-acid polypeptide reads, in one-letter code: MMAALYPSTDLSGASSSSLPSSPSSSSPNEVMALKDVREVKEENTLNEKLFLLACDKGDYYMVKKILEENSSGDLNINCVDVLGRNAVTITIENENLDILQLLLDYGCQSADALLVAIDSEVVGAVDILLNHRPKRSSRPTIVKLMERIQNPEYSTTMDVAPVILAAHRNNYEILTMLLKQDVSLPKPHAVGCECTLCSAKNKKDSLRHSRFRLDIYRCLASPALIMLTEEDPILRAFELSADLKELSLVEVEFRNDYEELARQCKMFAKDLLAQARNSRELEVILNHTSSDEPLDKRGLLEERMNLSRLKLAIKYNQKEFVSQSNCQQFLNTVWFGQMSGYRRKPTCKKIMTVLTVGIFWPVLSLCYLIAPKSQFGRIIHTPFMKFIIHGASYFTFLLLLNLYSLVYNEDKKNTMGPALERIDYLLILWIIGMIWSDIKRLWYEGLEDFLEESRNQLSFVMNSLYLATFALKVVAHNKFHDFADRKDWDAFHPTLVAEGLFAFANVLSYLRLFFMYTTSSILGPLQISMGQMLQDFGKFLGMFLLVLFSFTIGLTQLYDKGYTSKEQKDCVGIFCEQQSNDTFHSFIGTCFALFWYIFSLAHVAIFVTRFSYGEELQSFVGAVIVGTYNVVVVIVLTKLLVAMLHKSFQLIANHEDKEWKFARAKLWLSYFDDKCTLPPPFNIIPSPKTICYMISSLSKWICSHTSKGKVKRQNSLKEWRNLKQKRDENYQKVMCCLVHRYLTSMRQKMQSTDQATVENLNELRQDLSKFRNEIRDLLGFRTSKYAMFYPRN.

Residues 1–30 (MMAALYPSTDLSGASSSSLPSSPSSSSPNE) form a disordered region. The Cytoplasmic segment spans residues 1–345 (MMAALYPSTD…FGQMSGYRRK (345 aa)). Positions 15 to 28 (SSSSLPSSPSSSSP) are enriched in low complexity. ANK repeat units lie at residues 46 to 75 (LNEK…SGDL), 83 to 109 (LGRN…YGCQ), 111 to 156 (ADAL…EYST), and 158 to 180 (MDVA…MLLK). The Zn(2+) site is built by histidine 189, cysteine 193, cysteine 195, and cysteine 198. Residues 346 to 379 (PTCKKIMTVLTVGIFWPVLSLCYLIAPKSQFGRI) constitute an intramembrane region (discontinuously helical). Residues 380-386 (IHTPFMK) are Cytoplasmic-facing. The helical transmembrane segment at 387-404 (FIIHGASYFTFLLLLNLY) threads the bilayer. Residues 405–422 (SLVYNEDKKNTMGPALER) lie on the Extracellular side of the membrane. A helical transmembrane segment spans residues 423–439 (IDYLLILWIIGMIWSDI). The Cytoplasmic portion of the chain corresponds to 440–455 (KRLWYEGLEDFLEESR). Residues 456-475 (NQLSFVMNSLYLATFALKVV) form a helical membrane-spanning segment. Residues 476-496 (AHNKFHDFADRKDWDAFHPTL) are Extracellular-facing. A helical transmembrane segment spans residues 497–517 (VAEGLFAFANVLSYLRLFFMY). At 518 to 536 (TTSSILGPLQISMGQMLQD) the chain is on the cytoplasmic side. The chain crosses the membrane as a helical span at residues 537–558 (FGKFLGMFLLVLFSFTIGLTQL). The Extracellular segment spans residues 559 to 623 (YDKGYTSKEQ…GEELQSFVGA (65 aa)). Cysteine 571 and cysteine 576 are joined by a disulfide. Residues 624-644 (VIVGTYNVVVVIVLTKLLVAM) form a helical membrane-spanning segment. The Cytoplasmic segment spans residues 645-793 (LHKSFQLIAN…SKYAMFYPRN (149 aa)).

Belongs to the transient receptor (TC 1.A.4) family. STrpC subfamily. TRPC1 sub-subfamily. As to quaternary structure, heterotetramer with TRPC4 and/or TRPC5. Forms a heteromeric ion channel with TRPC4, with a 1:3 TRPC1:TRPC4 stoichiometry. Unlike other TRP channel proteins, does not form a homomeric channel. Interacts with TRPC4AP. Interacts with ITPR3. Interacts with MX1 and RNF24. Interacts with FKBP4. Interacts with PLSCR1. Interacts with PKD2L2. Forms a heterotetramer with PKD2 with a 2:2 stoichiometry; has distinct channel properties separate from PKD2 or TRPC1 homomers alone. Interacts with isoform 2 of TRPC3. Post-translationally, activation of PRKCA induces phosphorylation of TRPC1 and subsequent Ca2+ entry into cells. Seems to be ubiquitous.

The protein localises to the cell membrane. The catalysed reaction is Ca(2+)(in) = Ca(2+)(out). It catalyses the reaction Na(+)(in) = Na(+)(out). The enzyme catalyses Li(+)(in) = Li(+)(out). It carries out the reaction Cs(+)(in) = Cs(+)(out). Its activity is regulated as follows. May be operated by a phosphatidylinositol second messenger system activated by receptor tyrosine kinases or G-protein coupled receptors. Also activated by intracellular calcium store depletion. Inhibited by xanthine-based inhibitor Pico145. Its function is as follows. Forms a receptor-activated non-selective calcium permeant cation channel. Forms a heteromeric ion channel with TRPC4 or TRPC5 that has reduced calcium permeability compared to the homomeric TRPC4 or TRPC5 channel. Also permeable to monovalent ions including sodium, lithium and cesium ions. Functionally, forms a receptor-activated non-selective calcium permeant cation channel. Also activated by intracellular calcium store depletion. This Homo sapiens (Human) protein is Short transient receptor potential channel 1 (TRPC1).